A 391-amino-acid polypeptide reads, in one-letter code: Phosphoglycerate kinase (391 aa).

Substrate-binding positions include 23–25 (DFN), R38, 61–64 (HLGK), R117, and R150. ATP-binding positions include K201, G291, E322, and 348–351 (GGDS).

It belongs to the phosphoglycerate kinase family. Monomer.

The protein resides in the cytoplasm. It catalyses the reaction (2R)-3-phosphoglycerate + ATP = (2R)-3-phospho-glyceroyl phosphate + ADP. Its pathway is carbohydrate degradation; glycolysis; pyruvate from D-glyceraldehyde 3-phosphate: step 2/5. The sequence is that of Phosphoglycerate kinase from Clostridium beijerinckii (strain ATCC 51743 / NCIMB 8052) (Clostridium acetobutylicum).